A 476-amino-acid chain; its full sequence is Adenosylhomocysteinase (476 aa).

Residues T67, D142, and E202 each coordinate substrate. 203 to 205 is an NAD(+) binding site; it reads TTT. Residues K232 and D236 each contribute to the substrate site. NAD(+) is bound by residues N237, 266-271, E289, N324, 345-347, and N390; these read GYGDVG and IGH.

It belongs to the adenosylhomocysteinase family. It depends on NAD(+) as a cofactor.

It is found in the cytoplasm. It carries out the reaction S-adenosyl-L-homocysteine + H2O = L-homocysteine + adenosine. It participates in amino-acid biosynthesis; L-homocysteine biosynthesis; L-homocysteine from S-adenosyl-L-homocysteine: step 1/1. May play a key role in the regulation of the intracellular concentration of adenosylhomocysteine. The protein is Adenosylhomocysteinase of Prochlorococcus marinus (strain MIT 9211).